The following is a 354-amino-acid chain: MLNKEIGSDKKEESFFRSAFQKLKRIERPEKDKQKVPRDRSKLIAVTLWSCVGSLLFICLLAVLLSINTRSQLNDMKDETNKPTNDDKQKISVTAAENFLSGFINEYMNVKNDQESIEKRMQSLESYMVKQEDNHFEDEERFNVDGLKGDRELKGYSLYNVKEGDKNSLFQYKVTYENLYPVEKEVEKEVKDGKKKKKVKEKVKTNEKYEKQMLLNIPVTNKGDSFAVSAVPYFTQIYDLKGDIAFKGKEETRDEYAGEKKESIESFLQNFFEKYASEKKEEMVYMMKKPEALEGNLLFGEVQSVKIFETKKGFEVFCAVRFKEKENDIPVNEKFSLEITENSGQFYVNKLKHQ.

Residues 43-63 (LIAVTLWSCVGSLLFICLLAV) traverse the membrane as a helical segment.

It localises to the cell membrane. This is an uncharacterized protein from Bacillus subtilis (strain 168).